Here is a 148-residue protein sequence, read N- to C-terminus: Large ribosomal subunit protein bL9 (148 aa).

This sequence belongs to the bacterial ribosomal protein bL9 family.

Its function is as follows. Binds to the 23S rRNA. The chain is Large ribosomal subunit protein bL9 from Acidithiobacillus ferrooxidans (strain ATCC 23270 / DSM 14882 / CIP 104768 / NCIMB 8455) (Ferrobacillus ferrooxidans (strain ATCC 23270)).